The primary structure comprises 194 residues: Large ribosomal subunit protein eL15 (194 aa).

The tract at residues 164-194 (AGRKARGLRRKGRGAEKVRPSLRANFRKKRR) is disordered. Residues 166 to 175 (RKARGLRRKG) show a composition bias toward basic residues.

This sequence belongs to the eukaryotic ribosomal protein eL15 family.

The polypeptide is Large ribosomal subunit protein eL15 (rpl15e) (Archaeoglobus fulgidus (strain ATCC 49558 / DSM 4304 / JCM 9628 / NBRC 100126 / VC-16)).